The primary structure comprises 261 residues: MVVVAAAPNPADGTPKVLLLSGQPASAAGAPAGQALPLMVPAQRGASPEAASGGLPQARKRQRLTHLSPEEKALRRKLKNRVAAQTARDRKKARMSELEQQVVDLEEENQKLLLENQLLREKTHGLVVENQELRQRLGMDALVAEEEAEAKGNEVRPVAGSAESAALRLRAPLQQVQAQLSPLQNISPWILAVLTLQIQSLISCWAFWTTWTQSCSSNALPQSLPAWRSSQRSTQKDPVPYQPPFLCQWGRHQPSWKPLMN.

The Cytoplasmic segment spans residues Met-1 to Asn-185. The disordered stretch occupies residues Arg-44–Ala-93. Residues Ser-47 and Ser-68 each carry the phosphoserine modification. Residues Glu-70–Leu-133 form the bZIP domain. The segment at Lys-72–Arg-94 is basic motif. Residues Arg-75–Lys-92 are nuclear localization signal (NLS); in isoforms 1 and isoform 2. The interval Leu-98–Leu-133 is leucine-zipper. Residues Ile-186 to Ser-203 form a helical; Signal-anchor for type II membrane protein membrane-spanning segment. The Lumenal segment spans residues Cys-204–Asn-261. The tract at residues Gln-235–Asn-261 is necessary for the translational pausing of its own mRNA.

It belongs to the bZIP family. Isoform 2 interacts with SIRT1. Isoform 2 interacts with PIK3R1 and PIK3R2; the interactions are direct and induce translocation of XBP1 isoform 2 into the nucleus and the unfolded protein response (UPR) XBP1-dependent target genes activation in a ER stress- and/or insulin-dependent but PI3K-independent manner. Isoform 2 interacts with FOXO1; the interaction is direct and leads to FOXO1 ubiquitination and degradation via the proteasome pathway in hepatocytes. Isoform 1 interacts with HM13. Isoform 1 interacts with RNF139; the interaction induces ubiquitination and degradation of isoform 1. Isoform 1 interacts (via luminal domain) with DERL1; the interaction obviates the need for ectodomain shedding prior HM13/SPP-mediated XBP1 isoform 1 cleavage. Isoform 1 interacts with isoform 2; the interaction sequesters isoform 2 from the nucleus and enhances isoform 2 degradation in the cytoplasm. Isoform 1 interacts with HDAC3 and AKT1; the interactions occur in endothelial cell (EC) under disturbed flow. Isoform 1 interacts with the oncoprotein FOS. Isoform 2 interacts with ATF6; the interaction occurs in a ER stress-dependent manner and is required for DNA binding to the unfolded protein response element (UPRE). Isoform 2 interacts with PIK3R1; the interaction is direct and induces translocation of XBP1 isoform 2 into the nucleus and the unfolded protein response (UPR) XBP1-dependent target genes activation in a ER stress- and/or insulin-dependent but PI3K-independent manner. In terms of processing, acetylated by EP300; acetylation positively regulates the transcriptional activity of XBP1 isoform 2. Isoform 2 is deacetylated by SIRT1; deacetylation negatively regulates the transcriptional activity of XBP1 isoform 2. Post-translationally, ubiquitinated, leading to proteasome-mediated degradation in response to ER stress. X-box-binding protein 1, cytoplasmic form and luminal form are produced by intramembrane proteolytic cleavage of ER membrane-anchored isoform 1 triggered by HM13/SPP in a DERL1-RNF139-dependent and VCP/p97-independent manner. X-box-binding protein 1, luminal form is ubiquitinated leading to proteasomal degradation. As to expression, expressed in plasma cells in rheumatoid synovium. Over-expressed in primary breast cancer and metastatic breast cancer cells. Isoform 1 and isoform 2 are expressed at higher level in proliferating as compared to confluent quiescent endothelial cells.

It is found in the endoplasmic reticulum. The protein localises to the nucleus. It localises to the cytoplasm. The protein resides in the endoplasmic reticulum membrane. Its subcellular location is the membrane. Its function is as follows. Functions as a transcription factor during endoplasmic reticulum (ER) stress by regulating the unfolded protein response (UPR). Required for cardiac myogenesis and hepatogenesis during embryonic development, and the development of secretory tissues such as exocrine pancreas and salivary gland. Involved in terminal differentiation of B lymphocytes to plasma cells and production of immunoglobulins. Modulates the cellular response to ER stress in a PIK3R-dependent manner. Binds to the cis-acting X box present in the promoter regions of major histocompatibility complex class II genes. Involved in VEGF-induced endothelial cell (EC) proliferation and retinal blood vessel formation during embryonic development but also for angiogenesis in adult tissues under ischemic conditions. Also functions as a major regulator of the UPR in obesity-induced insulin resistance and type 2 diabetes for the management of obesity and diabetes prevention. In terms of biological role, plays a role in the unconventional cytoplasmic splicing processing of its own mRNA triggered by the endoplasmic reticulum (ER) transmembrane endoribonuclease ERN1: upon ER stress, the emerging XBP1 polypeptide chain, as part of a mRNA-ribosome-nascent chain (R-RNC) complex, cotranslationally recruits its own unprocessed mRNA through transient docking to the ER membrane and translational pausing, therefore facilitating efficient IRE1-mediated XBP1 mRNA isoform 2 production. In endothelial cells (EC), associated with KDR, promotes IRE1-mediated XBP1 mRNA isoform 2 productions in a vascular endothelial growth factor (VEGF)-dependent manner, leading to EC proliferation and angiogenesis. Functions as a negative feed-back regulator of the potent transcription factor XBP1 isoform 2 protein levels through proteasome-mediated degradation, thus preventing the constitutive activation of the ER stress response signaling pathway. Inhibits the transactivation activity of XBP1 isoform 2 in myeloma cells. Acts as a weak transcriptional factor. Together with HDAC3, contributes to the activation of NFE2L2-mediated HMOX1 transcription factor gene expression in a PI(3)K/mTORC2/Akt-dependent signaling pathway leading to EC survival under disturbed flow/oxidative stress. Binds to the ER stress response element (ERSE) upon ER stress. Binds to the consensus 5'-GATGACGTG[TG]N(3)[AT]T-3' sequence related to cAMP responsive element (CRE)-like sequences. Binds the Tax-responsive element (TRE) present in the long terminal repeat (LTR) of T-cell leukemia virus type 1 (HTLV-I) and to the TPA response elements (TRE). Associates preferentially to the HDAC3 gene promoter region in a static flow-dependent manner. Binds to the CDH5/VE-cadherin gene promoter region. Functions as a stress-inducible potent transcriptional activator during endoplasmic reticulum (ER) stress by inducing unfolded protein response (UPR) target genes via binding to the UPR element (UPRE). Up-regulates target genes encoding ER chaperones and ER-associated degradation (ERAD) components to enhance the capacity of productive folding and degradation mechanism, respectively, in order to maintain the homeostasis of the ER under ER stress. Plays a role in the production of immunoglobulins and interleukin-6 in the presence of stimuli required for plasma cell differentiation. Induces phospholipid biosynthesis and ER expansion. Contributes to the VEGF-induced endothelial cell (EC) growth and proliferation in a Akt/GSK-dependent and/or -independent signaling pathway, respectively, leading to beta-catenin nuclear translocation and E2F2 gene expression. Promotes umbilical vein EC apoptosis and atherosclerotisis development in a caspase-dependent signaling pathway, and contributes to VEGF-induced EC proliferation and angiogenesis in adult tissues under ischemic conditions. Involved in the regulation of endostatin-induced autophagy in EC through BECN1 transcriptional activation. Plays a role as an oncogene by promoting tumor progression: stimulates zinc finger protein SNAI1 transcription to induce epithelial-to-mesenchymal (EMT) transition, cell migration and invasion of breast cancer cells. Involved in adipocyte differentiation by regulating lipogenic gene expression during lactation. Plays a role in the survival of both dopaminergic neurons of the substantia nigra pars compacta (SNpc), by maintaining protein homeostasis and of myeloma cells. Increases insulin sensitivity in the liver as a response to a high carbohydrate diet, resulting in improved glucose tolerance. Also improves glucose homeostasis in an ER stress- and/or insulin-independent manner through both binding and proteasome-induced degradation of the transcription factor FOXO1, hence resulting in suppression of gluconeogenic genes expression and in a reduction of blood glucose levels. Controls the induction of de novo fatty acid synthesis in hepatocytes by regulating the expression of a subset of lipogenic genes in an ER stress- and UPR-independent manner. Associates preferentially to the HDAC3 gene promoter region in a disturbed flow-dependent manner. Binds to the BECN1 gene promoter region. Binds to the CDH5/VE-cadherin gene promoter region. Binds to the ER stress response element (ERSE) upon ER stress. Binds to the 5'-CCACG-3' motif in the PPARG promoter. The sequence is that of X-box-binding protein 1 from Homo sapiens (Human).